The primary structure comprises 118 residues: Large ribosomal subunit protein bL19 (118 aa).

Belongs to the bacterial ribosomal protein bL19 family.

Functionally, this protein is located at the 30S-50S ribosomal subunit interface and may play a role in the structure and function of the aminoacyl-tRNA binding site. This chain is Large ribosomal subunit protein bL19, found in Geobacter metallireducens (strain ATCC 53774 / DSM 7210 / GS-15).